A 319-amino-acid polypeptide reads, in one-letter code: Small ribosomal subunit protein RACK1 (319 aa).

A2 bears the N-acetylalanine mark. WD repeat units follow at residues 15–55 (GHNG…QKFG), 63–102 (GHSH…TYQR), 105–145 (GHKS…ATLL), 147–191 (HNDW…IEAD), 194–233 (GHNS…AMYT), 235–275 (SAQD…DDLR), and 284–319 (AAEP…MTAN). Glycyl lysine isopeptide (Lys-Gly) (interchain with G-Cter in ubiquitin) cross-links involve residues K46 and K53. T96 bears the Phosphothreonine mark. Residues K107, K137, and K161 each participate in a glycyl lysine isopeptide (Lys-Gly) (interchain with G-Cter in ubiquitin) cross-link. T168 carries the post-translational modification Phosphothreonine.

This sequence belongs to the WD repeat G protein beta family. Ribosomal protein RACK1 subfamily. In terms of assembly, component of the small ribosomal subunit (SSU). Mature yeast ribosomes consist of a small (40S) and a large (60S) subunit. The 40S small subunit contains 1 molecule of ribosomal RNA (18S rRNA) and 33 different proteins (encoded by 57 genes). The large 60S subunit contains 3 rRNA molecules (25S, 5.8S and 5S rRNA) and 46 different proteins (encoded by 81 genes). RACK1 is located at the head of the SSU in the vicinity of the mRNA exit channel. RACK1 interacts with the mRNA-binding protein SCP16. RACK1 also exists simultaneously as a homodimer in a cytosolic non-ribosome-bound form.

It is found in the cytoplasm. Its function is as follows. Component of the ribosome, a large ribonucleoprotein complex responsible for the synthesis of proteins in the cell. The small ribosomal subunit (SSU) binds messenger RNAs (mRNAs) and translates the encoded message by selecting cognate aminoacyl-transfer RNA (tRNA) molecules. The large subunit (LSU) contains the ribosomal catalytic site termed the peptidyl transferase center (PTC), which catalyzes the formation of peptide bonds, thereby polymerizing the amino acids delivered by tRNAs into a polypeptide chain. The nascent polypeptides leave the ribosome through a tunnel in the LSU and interact with protein factors that function in enzymatic processing, targeting, and the membrane insertion of nascent chains at the exit of the ribosomal tunnel. Located at the head of the 40S ribosomal subunit in the vicinity of the mRNA exit channel, RACK1 serves as a scaffold protein that can recruit other proteins to the ribosome. Involved in induction of the ribosome quality control (RQC) pathway; a pathway that degrades nascent peptide chains during problematic translation. Involved in the negative regulation of translation of a specific subset of proteins. This Saccharomyces cerevisiae (strain ATCC 204508 / S288c) (Baker's yeast) protein is Small ribosomal subunit protein RACK1.